The sequence spans 442 residues: Magnesium transporter MRS2-1 (442 aa).

Residues 1–30 (MSELKERLLPPRPASAMNLRDASVTRPSAS) are disordered. Transmembrane regions (helical) follow at residues 378–398 (LLLTTATFVVAIFGVVAGIFG) and 414–434 (WVLIITGVCGFVIFSAFVWFF). The Required for magnesium transport activity motif lies at 398–400 (GMN).

The protein belongs to the CorA metal ion transporter (MIT) (TC 1.A.35.5) family. Expressed in the whole plant except stems.

It localises to the membrane. In terms of biological role, magnesium transporter that may mediate the influx of magnesium. This chain is Magnesium transporter MRS2-1 (MRS2-1), found in Arabidopsis thaliana (Mouse-ear cress).